Reading from the N-terminus, the 149-residue chain is Large ribosomal subunit protein eL19 (149 aa).

A disordered region spans residues 46 to 99 (EDGTIEAKTAKGNSRGRARKRQQKRAYGHKKGHGSRKGRSGGRQNEKEDWQSRI). A compositionally biased stretch (basic residues) spans 59-85 (SRGRARKRQQKRAYGHKKGHGSRKGRS). Basic and acidic residues predominate over residues 89–99 (QNEKEDWQSRI).

The protein belongs to the eukaryotic ribosomal protein eL19 family. Part of the 50S ribosomal subunit.

Binds to the 23S rRNA. In Natronomonas pharaonis (strain ATCC 35678 / DSM 2160 / CIP 103997 / JCM 8858 / NBRC 14720 / NCIMB 2260 / Gabara) (Halobacterium pharaonis), this protein is Large ribosomal subunit protein eL19.